Here is a 421-residue protein sequence, read N- to C-terminus: Core-capsid bridging protein (421 aa).

The protein belongs to the adenoviridae core-capsid bridging protein family. Monomer. Homodimer. Exists in equilibrium between monomers and dimers in solution. Interacts with the histone-like nucleoprotein; this interactions bridge the virus core to the capsid. Interacts with core protein X; this interactions bridge the virus core to the capsid. Interacts with the endosome lysis protein VI; this interactions bridge the virus core to the capsid. Interacts with the peripentonal hexons. Interacts with host NPM1; this interaction might play a role in virus assembly.

The protein resides in the virion. The protein localises to the host nucleus. Its subcellular location is the host nucleolus. In terms of biological role, associates loosely with the viral DNA to form an outer shell around the nucleoprotein-DNA complex and links it with the capsid by binding the endosome lysis protein. Dissociates from the viral genome during entry. Might be involved in nuclear capsid assembly of the viral particles through its association with NPM1/nucleophosmin. In Canine adenovirus serotype 1 (strain CLL) (CAdV-1), this protein is Core-capsid bridging protein.